The primary structure comprises 648 residues: Centrosomal protein of 63 kDa-B (648 aa).

2 coiled-coil regions span residues 19 to 188 (DSCE…QSHN) and 222 to 555 (EEEL…DAAS). The residue at position 559 (Ser-559) is a Phosphoserine; by atm and atr. Positions 611–644 (FLQEEEQRSHELLQRLNAHIEELKQESQRTVEHF) form a coiled coil.

Belongs to the CEP63 family. In terms of processing, phosphorylation at Ser-559 by atm and atr promotes its delocalization from the centrosome and impairs its ability to promote centrosome dependent spindle assembly.

The protein resides in the cytoplasm. It is found in the cytoskeleton. It localises to the microtubule organizing center. The protein localises to the centrosome. Its subcellular location is the centriole. Its function is as follows. Required for normal spindle assembly. Plays a key role in mother-centriole-dependent centriole duplication. Plays a role in DNA damage response. Following DNA damage, such as double-strand breaks (DSBs), is removed from centrosomes; this leads to the inactivation of spindle assembly and delay in mitotic progression. The chain is Centrosomal protein of 63 kDa-B (cep63-b) from Xenopus laevis (African clawed frog).